We begin with the raw amino-acid sequence, 424 residues long: Catabolic NAD-specific glutamate dehydrogenase RocG (424 aa).

2 residues coordinate substrate: lysine 80 and lysine 104. Lysine 116 serves as the catalytic Proton donor. NAD(+) is bound by residues threonine 200 and asparagine 231. Serine 358 provides a ligand contact to substrate.

Belongs to the Glu/Leu/Phe/Val dehydrogenases family. In terms of assembly, homohexamer. Interacts with transcriptional regulator GltC.

It catalyses the reaction L-glutamate + NAD(+) + H2O = 2-oxoglutarate + NH4(+) + NADH + H(+). In terms of biological role, devoted to catabolic function of glutamate (and other amino acids of the glutamate family) utilization as sole nitrogen source. It is not involved in anabolic function of glutamate biosynthesis since B.subtilis possesses only one route of glutamate biosynthesis from ammonia, catalyzed by glutamate synthase. Wild-type cells are unable to utilize glutamate or glutamine as a sole carbon source; thus RocG does not function physiologically to synthesize glutamate, but it is involved in the utilization of arginine, and proline as carbon or nitrogen source. The catabolic RocG is essential for controlling gltAB expression via an inhibitory interactions with the transcriptional regulator GltC in response to the availability of sugars. The protein is Catabolic NAD-specific glutamate dehydrogenase RocG of Bacillus subtilis (strain 168).